The primary structure comprises 72 residues: MAVEKVNSSSSLAEVIDRILDKGIVIDAWVRVSLVGIELLSIEARIVIASVETYLKYAEAVGLTAQAAVPSV.

It belongs to the gas vesicle GvpA family. The gas vesicle shell is 2 nm thick and consists of a single layer of this protein. It forms helical ribs nearly perpendicular to the long axis of the vesicle.

The protein localises to the gas vesicle shell. In terms of biological role, gas vesicles are hollow, gas filled proteinaceous nanostructures found in some microorganisms. During planktonic growth they allow positioning of the organism at a favorable depth for light or nutrient acquisition. GvpA forms the protein shell. The chain is Gas vesicle protein A from Planktothrix agardhii (Oscillatoria agardhii).